Consider the following 208-residue polypeptide: Probable adenylyl-sulfate kinase (208 aa).

ATP is bound at residue 38-45; the sequence is GLSGSGKS. The Phosphoserine intermediate role is filled by S112.

Belongs to the APS kinase family.

The catalysed reaction is adenosine 5'-phosphosulfate + ATP = 3'-phosphoadenylyl sulfate + ADP + H(+). It participates in sulfur metabolism; hydrogen sulfide biosynthesis; sulfite from sulfate: step 2/3. Functionally, catalyzes the synthesis of activated sulfate. The sequence is that of Probable adenylyl-sulfate kinase from Halalkalibacterium halodurans (strain ATCC BAA-125 / DSM 18197 / FERM 7344 / JCM 9153 / C-125) (Bacillus halodurans).